A 496-amino-acid chain; its full sequence is Lysosomal Pro-X carboxypeptidase (496 aa).

The N-terminal stretch at 1 to 21 (MGRRALLLLLLSFLAPWATIA) is a signal peptide. The propeptide occupies 22-45 (LRPALRALGSLHLPTNPTSLPAVA). 2 N-linked (GlcNAc...) asparagine glycosylation sites follow: asparagine 47 and asparagine 101. The Charge relay system role is filled by serine 179. An SKS domain region spans residues 194–334 (HMVVGALAAS…QNIFQALNVY (141 aa)). Intrachain disulfides connect cysteine 215-cysteine 372, cysteine 233-cysteine 310, cysteine 264-cysteine 343, and cysteine 364-cysteine 394. Residues asparagine 317, asparagine 336, and asparagine 345 are each glycosylated (N-linked (GlcNAc...) asparagine). N-linked (GlcNAc...) asparagine glycosylation is present at asparagine 415. Residues aspartate 430 and histidine 455 each act as charge relay system in the active site.

It belongs to the peptidase S28 family. In terms of assembly, homodimer. In terms of tissue distribution, highest levels in placenta, lung and liver. Also present in heart, brain, pancreas and kidney.

The protein resides in the lysosome. It carries out the reaction Cleavage of a -Pro-|-Xaa bond to release a C-terminal amino acid.. Cleaves C-terminal amino acids linked to proline in peptides such as angiotensin II, III and des-Arg9-bradykinin. This cleavage occurs at acidic pH, but enzymatic activity is retained with some substrates at neutral pH. In Homo sapiens (Human), this protein is Lysosomal Pro-X carboxypeptidase (PRCP).